Here is a 926-residue protein sequence, read N- to C-terminus: Serine/threonine-protein kinase SIK2 (926 aa).

A Protein kinase domain is found at 20–271 (YDIEGTLGKG…IAQIKEHKWM (252 aa)). Threonine 25 carries the post-translational modification Phosphothreonine. ATP is bound by residues 26 to 34 (LGKGNFAVV) and lysine 49. Residue lysine 53 is modified to N6-acetyllysine; by EP300. The active-site Proton acceptor is aspartate 142. Phosphothreonine; by LKB1 is present on threonine 175. One can recognise a UBA domain in the interval 295–335 (EFNEQVLRLMHSLGIDQQKTIESLQNKSYNHFAAIYFLLVE). Phosphothreonine is present on threonine 484. Phosphoserine occurs at positions 534 and 587. Composition is skewed to low complexity over residues 644–659 (SSCPQEEVSQQQESVS) and 742–756 (SSYPQPSQQLPLPRQ). Disordered regions lie at residues 644–666 (SSCPQEEVSQQQESVSTLPASVH), 742–776 (SSYPQPSQQLPLPRQETPPPSQQAPPFSLTQPLSP), and 801–896 (PLPS…SSYD). Residues 765–774 (APPFSLTQPL) are compositionally biased toward polar residues. A compositionally biased stretch (pro residues) spans 822–834 (QPPPPPPPPPPRQ).

It belongs to the protein kinase superfamily. CAMK Ser/Thr protein kinase family. SNF1 subfamily. In terms of assembly, interacts with and phosphorylates TORC2/CRTC2. Mg(2+) serves as cofactor. Post-translationally, phosphorylated at Thr-175 by STK11/LKB1 in complex with STE20-related adapter-alpha (STRADA) pseudo kinase and CAB39. Phosphorylated at Thr-484 in response to insulin in adipocytes. Acetylation at Lys-53 inhibits kinase activity. Deacetylated by HDAC6.

It localises to the cytoplasm. It is found in the endoplasmic reticulum membrane. The enzyme catalyses L-seryl-[protein] + ATP = O-phospho-L-seryl-[protein] + ADP + H(+). The catalysed reaction is L-threonyl-[protein] + ATP = O-phospho-L-threonyl-[protein] + ADP + H(+). With respect to regulation, activated by phosphorylation on Thr-175. Serine/threonine-protein kinase that plays a role in many biological processes such as fatty acid oxidation, autophagy, immune response or glucose metabolism. Phosphorylates 'Ser-794' of IRS1 in insulin-stimulated adipocytes, potentially modulating the efficiency of insulin signal transduction. Inhibits CREB activity by phosphorylating and repressing TORCs, the CREB-specific coactivators. Phosphorylates EP300 and thus inhibits its histone acetyltransferase activity. In turn, regulates the DNA-binding ability of several transcription factors such as PPARA or MLXIPL. Also plays a role in thymic T-cell development. This chain is Serine/threonine-protein kinase SIK2 (SIK2), found in Homo sapiens (Human).